Consider the following 325-residue polypeptide: Structure-specific endonuclease subunit SLX1 (325 aa).

In terms of domain architecture, GIY-YIG spans 10–92; sequence ALYTVYILRS…NNPHLSMHIP (83 aa). The SLX1-type zinc finger occupies 230 to 284; it reads CVVCREEMKSGEGLHAVCTHEGCDGVGHISCWSRSFLKNNDTGSILPVQGQCPMC.

The protein belongs to the SLX1 family. Forms a heterodimer with SLX4. A divalent metal cation is required as a cofactor.

The protein resides in the nucleus. In terms of biological role, catalytic subunit of the SLX1-SLX4 structure-specific endonuclease that resolves DNA secondary structures generated during DNA repair and recombination. Has endonuclease activity towards branched DNA substrates, introducing single-strand cuts in duplex DNA close to junctions with ss-DNA. This Chaetomium globosum (strain ATCC 6205 / CBS 148.51 / DSM 1962 / NBRC 6347 / NRRL 1970) (Soil fungus) protein is Structure-specific endonuclease subunit SLX1.